Here is a 513-residue protein sequence, read N- to C-terminus: Xylose import ATP-binding protein XylG (513 aa).

2 ABC transporter domains span residues 5–242 and 259–505; these read LEMK…VGRE and LRIE…LRSE. An ATP-binding site is contributed by 37–44; the sequence is GENGSGKS.

The protein belongs to the ABC transporter superfamily. Xylose importer (TC 3.A.1.2.4) family. In terms of assembly, the complex is composed of two ATP-binding proteins (XylG), two transmembrane proteins (XylH) and a solute-binding protein (XylF).

The protein localises to the cell inner membrane. The catalysed reaction is D-xylose(out) + ATP + H2O = D-xylose(in) + ADP + phosphate + H(+). In terms of biological role, part of the ABC transporter complex XylFGH involved in xylose import. Responsible for energy coupling to the transport system. The XylFGH system can also transport ribose in absence of xylose. The chain is Xylose import ATP-binding protein XylG from Escherichia coli (strain K12).